A 100-amino-acid polypeptide reads, in one-letter code: Small ribosomal subunit protein uS14 (100 aa).

The protein belongs to the universal ribosomal protein uS14 family. In terms of assembly, part of the 30S ribosomal subunit. Contacts proteins S3 and S10.

Functionally, binds 16S rRNA, required for the assembly of 30S particles and may also be responsible for determining the conformation of the 16S rRNA at the A site. This is Small ribosomal subunit protein uS14 from Prochlorococcus marinus (strain MIT 9303).